A 308-amino-acid chain; its full sequence is uncharacterized protein (308 aa).

A disordered region spans residues 19 to 43; it reads EPQASGAGPAQTPPPVTVPMTPPSK. A compositionally biased stretch (pro residues) spans 29–43; sequence QTPPPVTVPMTPPSK.

This is an uncharacterized protein from Deinococcus radiodurans (strain ATCC 13939 / DSM 20539 / JCM 16871 / CCUG 27074 / LMG 4051 / NBRC 15346 / NCIMB 9279 / VKM B-1422 / R1).